Consider the following 413-residue polypeptide: Putative F-box protein At3g17560 (413 aa).

In terms of domain architecture, F-box spans 9–55 (TKLLFDLPQDVIEEIFSKVPVTCLRRIRSTCKRLYALLKDRGFIRKH).

In Arabidopsis thaliana (Mouse-ear cress), this protein is Putative F-box protein At3g17560.